The sequence spans 352 residues: Leukotriene B4 receptor 1 (352 aa).

Residues 1 to 19 (MNTTSSAAPPSLGVEFISL) are Extracellular-facing. Asparagine 2 carries N-linked (GlcNAc...) asparagine glycosylation. The helical transmembrane segment at 20–42 (LAIILLSVALAVGLPGNSFVVWS) threads the bilayer. Residues 43–54 (ILKRMQKRSVTA) are Cytoplasmic-facing. A helical membrane pass occupies residues 55–75 (LMVLNLALADLAVLLTAPFFL). Over 76-91 (HFLAQGTWSFGLAGCR) the chain is Extracellular. The chain crosses the membrane as a helical span at residues 92–113 (LCHYVCGVSMYASVLLITAMSL). Residues 114-138 (DRSLAVARPFVSQKLRTKAMARRVL) lie on the Cytoplasmic side of the membrane. Residues 139–159 (AGIWVLSFLLATPVLAYRTVV) form a helical membrane-spanning segment. Residues 160–178 (PWKTNMSLCFPRYPSEGHR) lie on the Extracellular side of the membrane. A glycan (N-linked (GlcNAc...) asparagine) is linked at asparagine 164. The helical transmembrane segment at 179–199 (AFHLIFEAVTGFLLPFLAVVA) threads the bilayer. Residues 200–221 (SYSDIGRRLQARRFRRSRRTGR) are Cytoplasmic-facing. A helical membrane pass occupies residues 222–242 (LVVLIILTFAAFWLPYHVVNL). At 243–268 (AEAGRALAGQAAGLGLVGKRLSLARN) the chain is on the extracellular side. A helical transmembrane segment spans residues 269 to 289 (VLIALAFLSSSVNPVLYACAG). Residues 290-352 (GGLLRSAGVG…SSPLKLNELN (63 aa)) lie on the Cytoplasmic side of the membrane. 2 stretches are compositionally biased toward polar residues: residues 310 to 326 (SEASSTRRGGSLGQTAR) and 338 to 352 (ESLTASSPLKLNELN). The disordered stretch occupies residues 310–352 (SEASSTRRGGSLGQTARSGPAALEPGPSESLTASSPLKLNELN).

The protein belongs to the G-protein coupled receptor 1 family. Post-translationally, phosphorylated by GRK6 upon leukotriene B4 binding; which promotes desensitization. In terms of tissue distribution, expressed at highest levels in heart, skeletal muscle and at lower levels in brain and liver. High level of expression in lymphoid tissues.

It localises to the cell membrane. Receptor for extracellular ATP &gt; UTP and ADP. The activity of this receptor is mediated by G proteins which activate a phosphatidylinositol-calcium second messenger system. May be the cardiac P2Y receptor involved in the regulation of cardiac muscle contraction through modulation of L-type calcium currents. Is a receptor for leukotriene B4, a potent chemoattractant involved in inflammation and immune response. This Homo sapiens (Human) protein is Leukotriene B4 receptor 1 (LTB4R).